The sequence spans 530 residues: MKESILSDLLNRRLSLLGANLDLLKQCLHGIERECLRVTDDGRLAQTPHPEALGSALTNEQITTDYSESLLEFITPALADPAKVLDSLEEIHRFVYTKLGGEYLWSPSMPCALPAEEDIPIAEYGSSNIGKLKHVYRKGLALRYGRTMQCIAGIHYNFSLPEALWPLLRDAEGGEQNDRDYQSSAYIALIRNFRRYSWLLMYLFGASPTLDKGFLRGRPHQLEELDEQTLYLPYATSLRMSDLGYQSNAQAGLTPCYNNLASYTDSLRKAVGTPYPPYVEVGTHKDGEWVQLNTNILQIENEYYSNIRPKRVTYTGERPIQALMSRGVQYVEVRCLDINPFLPVGIDLPEARFLDAFLLFCALEESPQLDNGECGQCTDNFLTVVKEGRRPGLELRRDGQPVALKAWATELIERIGQLAGLLDRAHGGNAHAKALETQQAKVDDPELTPSAQVLARMTEHDETFVQFSLRQSRLHAEAFREQPLPAERQQAYETLARESLAEQSRLEQQEVGDFDLFVGAYQASILAISN.

It belongs to the glutamate--cysteine ligase type 1 family. Type 1 subfamily.

It carries out the reaction L-cysteine + L-glutamate + ATP = gamma-L-glutamyl-L-cysteine + ADP + phosphate + H(+). It functions in the pathway sulfur metabolism; glutathione biosynthesis; glutathione from L-cysteine and L-glutamate: step 1/2. This chain is Glutamate--cysteine ligase, found in Pseudomonas entomophila (strain L48).